Reading from the N-terminus, the 185-residue chain is Protein GrpE (185 aa).

Belongs to the GrpE family. Homodimer.

It is found in the cytoplasm. Participates actively in the response to hyperosmotic and heat shock by preventing the aggregation of stress-denatured proteins, in association with DnaK and GrpE. It is the nucleotide exchange factor for DnaK and may function as a thermosensor. Unfolded proteins bind initially to DnaJ; upon interaction with the DnaJ-bound protein, DnaK hydrolyzes its bound ATP, resulting in the formation of a stable complex. GrpE releases ADP from DnaK; ATP binding to DnaK triggers the release of the substrate protein, thus completing the reaction cycle. Several rounds of ATP-dependent interactions between DnaJ, DnaK and GrpE are required for fully efficient folding. This is Protein GrpE from Methanobrevibacter smithii (strain ATCC 35061 / DSM 861 / OCM 144 / PS).